The sequence spans 878 residues: MSLSLKTRRFGRPVRPQLVLLLLFALCLLSVFISAYYLYGWKRGLEPSGSEAQSPDCDEPKISPSRLLPMKPLKPVDSSRTDPLVLVFVESLYSQLGQEIVAILESSRFKYRTEIAPGKGDMPTLTDKDRGRFALIVYENILKYVNLDAWNRELLDKYCVEYGVGIIGFFKANENSLLSAQLKGFPLYLHSNLGLKDCSINPKSPLLYITRPNQVEKGDLPGEDWTVFQSNHSTYEPVLLAKTKSAESIPHLSVDAALHTTVVQDLGLHDGIQRVLFGNNLNFWLHKLVFVDAVSFLTGKRLSLPLNRYVLVDIDDIFVGKEGTRMKVEDVKALYDTQMELRTHIPNFTFNLGFSGKFFHTGTDAEDEGDDLLLSYVKQFWWFPHMWSHMQPHLFHNQSVLAEQMALNRKFAVEHGIPTDMGYAVAPHHSGVYPVHVQLYEAWKQIWGIKVTSTEEYPHLKPARYRRGFVHNGIMVLPRQTCGLFTHTIFYNEYPGGPVELDKIINGGELFLTVLLNPISIFMTHLSNYGNDRLGLYTFKHLVQFLNTWTNLKLETLPPVQLAHKYFQIFPEEKDPLWQDPCEDKRHKDIWSKEKTCDRFPKLLIIGPQKTGTTALYLFLGMHSDLSSNYPSSETFEEIQFFNGQNYHKGIDWFMEFFPIPSNTTSDFYFEKSANYFDSELAPRRVAALLPKAKIITILINPADRAYSWYQHQRAHDDPVAMKYTFQEVITAGPEAPQRLRALQNRCLVPGWYSTHIERWMNHFHANQILVLDGKLLRTEPANVMETVQKFLGVTNAMDYHKTLAFDPKKGFWCQLLDGGRTKCLGKSKGRKYPDMDSDSRSFLMDYYRDHNIELSKLLYKMGQTLPTWLREELQSTR.

Topologically, residues 1 to 17 are cytoplasmic; that stretch reads MSLSLKTRRFGRPVRPQ. The tract at residues 1 to 169 is sufficient for localization to Golgi membrane; sequence MSLSLKTRRF…VEYGVGIIGF (169 aa). A helical; Signal-anchor for type II membrane protein membrane pass occupies residues 18 to 38; sequence LVLLLLFALCLLSVFISAYYL. Over 39 to 878 the chain is Lumenal; sequence YGWKRGLEPS…WLREELQSTR (840 aa). The heparan sulfate N-deacetylase 1 stretch occupies residues 40-594; the sequence is GWKRGLEPSG…KRHKDIWSKE (555 aa). The disordered stretch occupies residues 47–71; that stretch reads PSGSEAQSPDCDEPKISPSRLLPMK. N-linked (GlcNAc...) asparagine glycosylation is found at N231, N347, and N397. The interval 595-878 is heparan sulfate N-sulfotransferase 1; that stretch reads KTCDRFPKLL…WLREELQSTR (284 aa). K610 acts as the For sulfotransferase activity in catalysis. 610 to 614 is an adenosine 3',5'-bisphosphate binding site; the sequence is KTGTT. N663 carries N-linked (GlcNAc...) asparagine glycosylation. The adenosine 3',5'-bisphosphate site is built by S708 and W813. C814 and C824 are joined by a disulfide. An adenosine 3',5'-bisphosphate-binding site is contributed by 829-833; that stretch reads KGRKY.

Belongs to the sulfotransferase 1 family. NDST subfamily. In terms of assembly, monomer.

It is found in the golgi apparatus membrane. Its subcellular location is the golgi apparatus. The protein localises to the trans-Golgi network membrane. The catalysed reaction is alpha-D-glucosaminyl-[heparan sulfate](n) + 3'-phosphoadenylyl sulfate = N-sulfo-alpha-D-glucosaminyl-[heparan sulfate](n) + adenosine 3',5'-bisphosphate + 2 H(+). The protein operates within glycan metabolism; heparan sulfate biosynthesis. It participates in glycan metabolism; heparin biosynthesis. Its function is as follows. Essential bifunctional enzyme that catalyzes both the N-deacetylation and the N-sulfation of glucosamine (GlcNAc) of the glycosaminoglycan in heparan sulfate. Modifies the GlcNAc-GlcA disaccharide repeating sugar backbone to make N-sulfated heparosan, a prerequisite substrate for later modifications in heparin biosynthesis. Plays a role in determining the extent and pattern of sulfation of heparan sulfate. In Xenopus tropicalis (Western clawed frog), this protein is Bifunctional heparan sulfate N-deacetylase/N-sulfotransferase 1 (ndst1).